The following is a 338-amino-acid chain: Tetraacyldisaccharide 4'-kinase (338 aa).

51 to 58 provides a ligand contact to ATP; that stretch reads HLGGAGKT.

It belongs to the LpxK family.

The catalysed reaction is a lipid A disaccharide + ATP = a lipid IVA + ADP + H(+). Its pathway is glycolipid biosynthesis; lipid IV(A) biosynthesis; lipid IV(A) from (3R)-3-hydroxytetradecanoyl-[acyl-carrier-protein] and UDP-N-acetyl-alpha-D-glucosamine: step 6/6. Transfers the gamma-phosphate of ATP to the 4'-position of a tetraacyldisaccharide 1-phosphate intermediate (termed DS-1-P) to form tetraacyldisaccharide 1,4'-bis-phosphate (lipid IVA). The sequence is that of Tetraacyldisaccharide 4'-kinase from Rhodopseudomonas palustris (strain HaA2).